The chain runs to 157 residues: UPF0178 protein BH1374 (157 aa).

This sequence belongs to the UPF0178 family.

This Halalkalibacterium halodurans (strain ATCC BAA-125 / DSM 18197 / FERM 7344 / JCM 9153 / C-125) (Bacillus halodurans) protein is UPF0178 protein BH1374.